Here is a 354-residue protein sequence, read N- to C-terminus: Tsukushi (354 aa).

Positions 1 to 17 (MLCSLFLLLLAVGRVQT) are cleaved as a signal peptide. One can recognise an LRRNT domain in the interval 18 to 59 (TRPCFPGCQCEEETFGLFDSFSLIRVDCSSLGPHIVPVPIPL). LRR repeat units lie at residues 60–81 (DTAHLDLSSNRLETVNESVLAG), 86–107 (TLAGLDLSYNLLTSIMPSAFSR), 110–131 (YLESLDLSHNGLAALPAEIFTS), 133–154 (PLSDINLSHNRLREVSISAFTT), 160–180 (ALHVDLSHNLIHRLLPHPARA), 186–207 (TIQSLNLSWNRFRAVPDLRDLP), 208–228 (LRYLSLDGNPLATINPDAFMG), 231–253 (GLTHLSLASLQGILHLPPHGFRE), 256–277 (GLQVLDLSGNPKLKWAGAEVFS), and 281–302 (LLQELDLSGSSLVPLPEMLLHH). Asn-75 is a glycosylation site (N-linked (GlcNAc...) asparagine). The N-linked (GlcNAc...) asparagine glycan is linked to Asn-138. A glycan (N-linked (GlcNAc...) asparagine) is linked at Asn-191.

Interacts with FZD4 (via FZ domain); competes with WNT2B for binding to FZD4, inhibiting Wnt signaling and repressing peripheral eye development. Interacts with TGFB1; the interaction contributes to regulation of the hair cycle. Interacts with netrin. Interacts with CCN2. As to expression, expressed in macrophages in inflamed wounds with wound expression starting 2 days post-wounding (dpw) (at protein level). At 7 dpw, expressed from epidermis and extracellular matrix in the wound edge to neoepidermis and granulation tissue and in panniculus carnosus under the granulation tissue (at protein level). After fibrosis, disappears in the dermal area at 11 dpw (at protein level). Expressed in the hair follicle during morphogenesis and the hair cycle (at protein level). In embryonic brain, strong expression in the olfactory bulb, anterior olfactory nucleus, neocortex, piriform cortex, glial wedge, midline zipper glia, indusium griseum and the area surrounding the anterior commissure (AC) but not on AC axons (at protein level). In the adult eye, expressed in retinal layers, lens epithelium, and ciliary body where it is expressed predominantly in the inner non-pigmented layer. Expressed in almost all brain regions in the embryo, in the cortex and the lateral ventricle at P0 and is restricted to the subventricular zone and lateral nucleus of the amygdala in adults. Prominent expression in hippocampal regions from early postnatal stages until postnatal day 15 and gradually declines at later stages. Expressed in almost all bone regions in the femurs of juveniles. In the inner ear, accumulates in nonprosensory regions during early embryonic stages and in both nonprosensory and prosensory regions in late embryonic stages. In the adult ear, expressed in the organ of Corti, spiral ganglion cells, and the stria vascularis. Highly expressed in the liver where it is detected primarily in hepatocytes but not in non-parenchymal cells.

The protein resides in the secreted. Contributes to various developmental events and other processes such as wound healing and cholesterol homeostasis through its interactions with multiple signaling pathways. Wnt signaling inhibitor which competes with WNT2B for binding to Wnt receptor FZD4 and represses WNT2B-dependent development of the peripheral eye. Plays a role in regulating the hair cycle by controlling TGFB1 signaling. Required for the development of the anterior commissure in the brain by inhibiting neurite outgrowth. Essential for terminal differentiation of hippocampal neural stem cells. Plays a role in regulating bone elongation and bone mass by modulating growth plate chondrocyte function and overall body size. Required for development of the inner ear through its involvement in stereocilia formation in inner hair cells. Facilitates wound healing by inhibiting secretion of TGFB1 from macrophages which prevents myofibroblast differentiation, maintaining inflammatory cell quiescence. Plays a role in cholesterol homeostasis by reducing circulating high-density lipoprotein cholesterol, lowering cholesterol efflux capacity and decreasing cholesterol-to-bile acid conversion in the liver. In one study, shown to negatively regulate sympathetic innervation in brown fat, leading to reduced energy expenditure. In another study, shown not to affect brown fat thermogenic capacity, body weight gain or glucose homeostasis. In Mus musculus (Mouse), this protein is Tsukushi.